A 45-amino-acid polypeptide reads, in one-letter code: Photosystem II reaction center protein K (45 aa).

Residues 1–8 (MEAALLLA) constitute a propeptide that is removed on maturation. A helical transmembrane segment spans residues 24–44 (LPVIPVFFLLLAFVWQAAVGF).

It belongs to the PsbK family. PSII is composed of 1 copy each of membrane proteins PsbA, PsbB, PsbC, PsbD, PsbE, PsbF, PsbH, PsbI, PsbJ, PsbK, PsbL, PsbM, PsbT, PsbX, PsbY, PsbZ, Psb30/Ycf12, peripheral proteins PsbO, CyanoQ (PsbQ), PsbU, PsbV and a large number of cofactors. It forms dimeric complexes.

The protein resides in the cellular thylakoid membrane. In terms of biological role, one of the components of the core complex of photosystem II (PSII). PSII is a light-driven water:plastoquinone oxidoreductase that uses light energy to abstract electrons from H(2)O, generating O(2) and a proton gradient subsequently used for ATP formation. It consists of a core antenna complex that captures photons, and an electron transfer chain that converts photonic excitation into a charge separation. This is Photosystem II reaction center protein K from Synechococcus elongatus (strain ATCC 33912 / PCC 7942 / FACHB-805) (Anacystis nidulans R2).